A 227-amino-acid chain; its full sequence is Ribonuclease 3 (227 aa).

Residues 5–127 (YQKLSRRIGY…IIGAMYLDAG (123 aa)) enclose the RNase III domain. Residue Glu40 participates in Mg(2+) binding. The active site involves Asp44. Positions 113 and 116 each coordinate Mg(2+). The active site involves Glu116. A DRBM domain is found at 154 to 224 (DAKTRLQEFL…AAKALKKLEK (71 aa)).

Belongs to the ribonuclease III family. In terms of assembly, homodimer. Requires Mg(2+) as cofactor.

It localises to the cytoplasm. It catalyses the reaction Endonucleolytic cleavage to 5'-phosphomonoester.. Digests double-stranded RNA. Involved in the processing of primary rRNA transcript to yield the immediate precursors to the large and small rRNAs (23S and 16S). Processes some mRNAs, and tRNAs when they are encoded in the rRNA operon. Processes pre-crRNA and tracrRNA of type II CRISPR loci if present in the organism. The polypeptide is Ribonuclease 3 (Marinomonas sp. (strain MWYL1)).